The following is a 496-amino-acid chain: Aspartyl/glutamyl-tRNA(Asn/Gln) amidotransferase subunit B (496 aa).

It belongs to the GatB/GatE family. GatB subfamily. As to quaternary structure, heterotrimer of A, B and C subunits.

It catalyses the reaction L-glutamyl-tRNA(Gln) + L-glutamine + ATP + H2O = L-glutaminyl-tRNA(Gln) + L-glutamate + ADP + phosphate + H(+). The enzyme catalyses L-aspartyl-tRNA(Asn) + L-glutamine + ATP + H2O = L-asparaginyl-tRNA(Asn) + L-glutamate + ADP + phosphate + 2 H(+). In terms of biological role, allows the formation of correctly charged Asn-tRNA(Asn) or Gln-tRNA(Gln) through the transamidation of misacylated Asp-tRNA(Asn) or Glu-tRNA(Gln) in organisms which lack either or both of asparaginyl-tRNA or glutaminyl-tRNA synthetases. The reaction takes place in the presence of glutamine and ATP through an activated phospho-Asp-tRNA(Asn) or phospho-Glu-tRNA(Gln). This is Aspartyl/glutamyl-tRNA(Asn/Gln) amidotransferase subunit B from Xanthobacter autotrophicus (strain ATCC BAA-1158 / Py2).